Reading from the N-terminus, the 891-residue chain is Alanine--tRNA ligase (891 aa).

Histidine 564, histidine 568, cysteine 677, and histidine 681 together coordinate Zn(2+).

The protein belongs to the class-II aminoacyl-tRNA synthetase family. Zn(2+) is required as a cofactor.

The protein localises to the cytoplasm. The catalysed reaction is tRNA(Ala) + L-alanine + ATP = L-alanyl-tRNA(Ala) + AMP + diphosphate. Functionally, catalyzes the attachment of alanine to tRNA(Ala) in a two-step reaction: alanine is first activated by ATP to form Ala-AMP and then transferred to the acceptor end of tRNA(Ala). Also edits incorrectly charged Ser-tRNA(Ala) and Gly-tRNA(Ala) via its editing domain. The polypeptide is Alanine--tRNA ligase (Rhodopseudomonas palustris (strain BisA53)).